A 563-amino-acid chain; its full sequence is Chitinase A (563 aa).

The N-terminal stretch at 1–23 (MRKFNKPLLALLIGSTLCSAAQA) is a signal peptide. The GH18 domain occupies 158–559 (KVVGSYFVEW…NSMNASLGNS (402 aa)). Glu-315 acts as the Proton donor in catalysis.

This sequence belongs to the glycosyl hydrolase 18 family. Chitinase class II subfamily.

It catalyses the reaction Random endo-hydrolysis of N-acetyl-beta-D-glucosaminide (1-&gt;4)-beta-linkages in chitin and chitodextrins.. This Serratia marcescens protein is Chitinase A (chiA).